A 349-amino-acid polypeptide reads, in one-letter code: Phenylalanine--tRNA ligase alpha subunit (349 aa).

E262 is a binding site for Mg(2+).

The protein belongs to the class-II aminoacyl-tRNA synthetase family. Phe-tRNA synthetase alpha subunit type 1 subfamily. In terms of assembly, tetramer of two alpha and two beta subunits. Mg(2+) serves as cofactor.

It localises to the cytoplasm. The catalysed reaction is tRNA(Phe) + L-phenylalanine + ATP = L-phenylalanyl-tRNA(Phe) + AMP + diphosphate + H(+). This Sorangium cellulosum (strain So ce56) (Polyangium cellulosum (strain So ce56)) protein is Phenylalanine--tRNA ligase alpha subunit.